The following is a 220-amino-acid chain: Small ribosomal subunit protein mS23 (220 aa).

The protein belongs to the mitochondrion-specific ribosomal protein mS23 family. As to quaternary structure, component of the mitochondrial small ribosomal subunit (mt-SSU). Mature yeast 74S mitochondrial ribosomes consist of a small (37S) and a large (54S) subunit. The 37S small subunit contains a 15S ribosomal RNA (15S mt-rRNA) and at least 32 different proteins. The 54S large subunit contains a 21S rRNA (21S mt-rRNA) and at least 45 different proteins.

The protein localises to the mitochondrion. Component of the mitochondrial ribosome (mitoribosome), a dedicated translation machinery responsible for the synthesis of mitochondrial genome-encoded proteins, including at least some of the essential transmembrane subunits of the mitochondrial respiratory chain. The mitoribosomes are attached to the mitochondrial inner membrane and translation products are cotranslationally integrated into the membrane. The sequence is that of Small ribosomal subunit protein mS23 (rsm25) from Schizosaccharomyces pombe (strain 972 / ATCC 24843) (Fission yeast).